The sequence spans 292 residues: UDP-N-acetylenolpyruvoylglucosamine reductase (292 aa).

The FAD-binding PCMH-type domain maps to K27 to G188. The active site involves R166. The active-site Proton donor is the S217. Residue E288 is part of the active site.

This sequence belongs to the MurB family. Requires FAD as cofactor.

The protein resides in the cytoplasm. The enzyme catalyses UDP-N-acetyl-alpha-D-muramate + NADP(+) = UDP-N-acetyl-3-O-(1-carboxyvinyl)-alpha-D-glucosamine + NADPH + H(+). Its pathway is cell wall biogenesis; peptidoglycan biosynthesis. Its function is as follows. Cell wall formation. The polypeptide is UDP-N-acetylenolpyruvoylglucosamine reductase (Thermosipho melanesiensis (strain DSM 12029 / CIP 104789 / BI429)).